Here is a 199-residue protein sequence, read N- to C-terminus: Probable molybdenum cofactor guanylyltransferase (199 aa).

GTP contacts are provided by residues 9-11, Lys-21, Asp-69, and Asp-100; that span reads LAG. Asp-100 is a Mg(2+) binding site.

This sequence belongs to the MobA family. Mg(2+) serves as cofactor.

The protein resides in the cytoplasm. It carries out the reaction Mo-molybdopterin + GTP + H(+) = Mo-molybdopterin guanine dinucleotide + diphosphate. Transfers a GMP moiety from GTP to Mo-molybdopterin (Mo-MPT) cofactor (Moco or molybdenum cofactor) to form Mo-molybdopterin guanine dinucleotide (Mo-MGD) cofactor. This is Probable molybdenum cofactor guanylyltransferase from Bacillus cytotoxicus (strain DSM 22905 / CIP 110041 / 391-98 / NVH 391-98).